A 506-amino-acid polypeptide reads, in one-letter code: Tetratricopeptide repeat protein 8 (506 aa).

The disordered stretch occupies residues 83–112 (RPGTSFARPKTSAKGVNPILRPTTNAGRPL). TPR repeat units follow at residues 217 to 250 (YYWKNQLAKCYLRLGMLQDATKQLQSSLEQKKLI), 251 to 283 (ETFALLSKAYNRVDQPMAALKTYSAGLEVFPEN), 284 to 317 (VTMLTGMARVQEALGEYDESVKLYKRVLDAESNN), 319 to 351 (EAIACVATTYYYGGKPELAMRYYRRILQMGVSS), 353 to 385 (ELFLNIGLCCMAAQQFDFALSSILRAQSTMTDD), 388 to 421 (ADVWYNIGQILVDIGDLVSAARSFRIALSHDPDH), 423 to 455 (ESLVNLGILKHREGKIDEARSLYSSATSKNPYM), and 456 to 489 (FEGNYNLGLVSFTQGKYHECRELIEKALAAFPEH).

In terms of assembly, part of BBSome complex, that contains at least bbs-1, bbs-2, bbs-4, bbs-5, osm-12, bbs-8/ttc-8 and bbs-9. In terms of tissue distribution, expressed in head and tail neurons. Expressed in ciliated male tail-neurons. Expressed in thermosensory and CO(2) sensory AFD neurons.

The protein localises to the cell projection. Its subcellular location is the cilium. It localises to the cytoplasm. The protein resides in the cytoskeleton. It is found in the cilium basal body. The protein localises to the cilium axoneme. Functionally, component of the BBSome complex. The BBSome complex is thought to function as a coat complex required for sorting of specific membrane proteins to the primary cilia. The BBSome complex is required for ciliogenesis but is dispensable for centriolar satellite function. Required for proper BBSome complex assembly and its ciliary localization. Required for cilia biogenesis and both the assembly and movement of intraflagellar transport proteins along the ciliary axoneme. Plays a role in guanylyl cyclase localization in the ring-like structures at the base of the finger compartment in AFD sensory neurons. In Caenorhabditis elegans, this protein is Tetratricopeptide repeat protein 8.